The primary structure comprises 515 residues: Histidine ammonia-lyase (515 aa).

The 5-imidazolinone (Ala-Gly) cross-link spans 148-150; the sequence is ASG. A 2,3-didehydroalanine (Ser) modification is found at S149.

It belongs to the PAL/histidase family. Post-translationally, contains an active site 4-methylidene-imidazol-5-one (MIO), which is formed autocatalytically by cyclization and dehydration of residues Ala-Ser-Gly.

The protein localises to the cytoplasm. It carries out the reaction L-histidine = trans-urocanate + NH4(+). The protein operates within amino-acid degradation; L-histidine degradation into L-glutamate; N-formimidoyl-L-glutamate from L-histidine: step 1/3. The polypeptide is Histidine ammonia-lyase (Pseudomonas syringae pv. tomato (strain ATCC BAA-871 / DC3000)).